Here is a 567-residue protein sequence, read N- to C-terminus: Probable serine/threonine-protein kinase WNK6 (567 aa).

The 258-residue stretch at 28–285 folds into the Protein kinase domain; it reads IRYKEVIGKG…AKELLLDPFL (258 aa). ATP is bound by residues 108-111 and Lys158; that span reads TELF. Asp175 functions as the Proton acceptor in the catalytic mechanism. Basic and acidic residues predominate over residues 499-509; it reads VDATKGEDKSS. The segment at 499–528 is disordered; the sequence is VDATKGEDKSSIQEVEEATEPVSLEEEERL. Over residues 512-525 the composition is skewed to acidic residues; sequence EVEEATEPVSLEEE. Residues 519-553 adopt a coiled-coil conformation; sequence PVSLEEEERLRQELEEIEAKYQEDMKEIATKREEA.

It belongs to the protein kinase superfamily. Ser/Thr protein kinase family. WNK subfamily.

It catalyses the reaction L-seryl-[protein] + ATP = O-phospho-L-seryl-[protein] + ADP + H(+). It carries out the reaction L-threonyl-[protein] + ATP = O-phospho-L-threonyl-[protein] + ADP + H(+). In terms of biological role, may regulate flowering time by modulating the photoperiod pathway. This is Probable serine/threonine-protein kinase WNK6 (WNK6) from Arabidopsis thaliana (Mouse-ear cress).